A 218-amino-acid chain; its full sequence is MGQKINPLGFRLGTTQSHHSLWFAQPKKYSEGLEEDKKIRDCIKNYVQNNIRISSGMEGIARIEIQKRIDLIQIIIYMGFPKLLIEDKPRRIEELQINVQKELNCVNRKLNIAITRISNPYGHPNILAEFIAGQLKNRVSFRKAMKKAIELTEQANTKGIQVQIAGRIDGKEIARVEWIREGRVPLQTIDAKIDYCSYTVRTIYGVLGIKIWIFVDEE.

Residues 47–118 (VQNNIRISSG…KLNIAITRIS (72 aa)) form the KH type-2 domain.

It belongs to the universal ribosomal protein uS3 family. As to quaternary structure, part of the 30S ribosomal subunit.

It is found in the plastid. The protein resides in the chloroplast. This chain is Small ribosomal subunit protein uS3c (rps3), found in Draba nemorosa (Woodland whitlowgrass).